Reading from the N-terminus, the 3890-residue chain is Extracellular matrix-binding protein EbhB (3890 aa).

The first 39 residues, 1–39, serve as a signal peptide directing secretion; that stretch reads MNYRDKIQKFSIRKYTVGTFSTVIATLVFLGFNTSQAHA. The span at 41–59 shows a compositional bias: polar residues; the sequence is ETNQPASVVKQKQQSNNEQ. Disordered stretches follow at residues 41-152, 249-277, 1347-1372, and 2418-2438; these read ETNQ…GNDN, MPQR…PRSV, NEKA…NATT, and TITP…TLTA. The segment covering 65-78 has biased composition (low complexity); that stretch reads SQVQNSQNSQNSQS. Residues 79–117 show a composition bias toward polar residues; sequence LSATHENEQPNNSQANLVNQKVAQSSTTNDEQPASQNVN. Over residues 130 to 140 the composition is skewed to basic and acidic residues; the sequence is PDKEESKHKQN. Composition is skewed to polar residues over residues 141-151, 250-266, 1360-1372, and 2427-2438; these read ESQSANKNGND, PQRQ…QTRS, YRTT…NATT, and HSVSSNPSTLTA. FIVAR domains lie at 2524-2580, 2610-2666, 2687-2750, 2780-2836, 2864-2919, 2947-3002, 3030-3085, 3154-3212, 3280-3339, 3407-3465, 3533-3591, 3659-3717, and 3785-3843; these read AKNH…VSDA, SKNN…ISDE, DTHA…VQSA, AKTK…IAAE, AKTQ…IRQN, AKNQ…INTN, AKTQ…INDK, AMTK…VNQK, AMTG…VNNA, AMGN…VNRA, AMGN…VTEA, AMNT…ITQK, and AMAN…VEAA.

This is Extracellular matrix-binding protein EbhB (ebhB) from Staphylococcus aureus (strain N315).